The primary structure comprises 425 residues: Elongation factor 1-alpha (425 aa).

Residues K5–T221 form the tr-type G domain. Residues G14 to S21 form a G1 region. G14–S21 provides a ligand contact to GTP. Residue S21 participates in Mg(2+) binding. The G2 stretch occupies residues G70–D74. A G3 region spans residues D91–G94. GTP is bound by residues D91–H95 and N146–D149. The tract at residues N146–D149 is G4. A G5 region spans residues S185 to F187.

The protein belongs to the TRAFAC class translation factor GTPase superfamily. Classic translation factor GTPase family. EF-Tu/EF-1A subfamily.

It localises to the cytoplasm. The enzyme catalyses GTP + H2O = GDP + phosphate + H(+). GTP hydrolase that promotes the GTP-dependent binding of aminoacyl-tRNA to the A-site of ribosomes during protein biosynthesis. The polypeptide is Elongation factor 1-alpha (Methanocorpusculum labreanum (strain ATCC 43576 / DSM 4855 / Z)).